A 552-amino-acid chain; its full sequence is AP-1-like transcription factor (552 aa).

Over residues 1 to 14 (MSGQTETLSSTSNI) the composition is skewed to polar residues. Positions 1–99 (MSGQTETLSS…QRAFRKRKED (99 aa)) are disordered. Over residues 36 to 47 (PVSDRSSRRTSS) the composition is skewed to basic and acidic residues. The span at 48 to 61 (EEVDLMPNVDDEVD) shows a compositional bias: acidic residues. Basic and acidic residues predominate over residues 62-80 (GDVKPKKIGRKNSDQEPSS). The bZIP domain maps to 76-139 (QEPSSKRKAQ…RQLEEELRIL (64 aa)). A Nuclear localization signal motif is present at residues 81–88 (KRKAQNRA). Residues 81 to 102 (KRKAQNRAAQRAFRKRKEDHLK) form a basic motif region. A leucine-zipper region spans residues 104–111 (LETQVVTL). The disordered stretch occupies residues 213-244 (QVPPTLVDSNSAQGTLSPETPSSSDSPSNLYL). Polar residues predominate over residues 219–228 (VDSNSAQGTL). The segment covering 229–240 (SPETPSSSDSPS) has biased composition (low complexity). Residues 259-290 (CSALSNGENGEDVADGKQFCQKLSTACGSIAC) are n-CRD. Intrachain disulfides connect Cys278-Cys501 and Cys285-Cys532. A disordered region spans residues 460–489 (ISNHPDEVPPDGLPQKGKHDTSSQMPSENE). The segment at 501–532 (CPKVWSKIINHPRFESFDIDDLCSKLKNKAKC) is c-CRD. The short motif at 515-533 (ESFDIDDLCSKLKNKAKCS) is the Nuclear export signal element.

Belongs to the bZIP family. YAP subfamily. As to quaternary structure, homodimer. The reduced form of pap1 interacts in the nucleus with the nuclear export protein crm1, and in the cytoplasm with the peroxiredoxin tpx1. Depending on the oxidative stress inducing agent, pap1 can undergo two distinct conformational changes, both masking the nuclear export signal, thus abolishing nuclear export by crm1/exportin 1. The glutathione-depleting agent diethylmaleate (DEM) leads to the non-reversible modification of at least 2 cysteine residues in the c-CRD. Peroxide stress induces the formation of a tpx1-dependent interdomain disulfide bond between Cys-278 and Cys-501.

It is found in the nucleus. It localises to the cytoplasm. Functionally, transcription activator involved in multidrug resistance, oxidative stress response, and redox homeostasis. Regulates the transcription of genes encoding antioxidant enzymes like catalase ctt1 and components of the cellular thiol-reducing pathways, including the thioredoxin system (trx2, trr1), ABC transporters involved in multidrug resistance like bfr1/hba2 and pmd1 as well as the gene obr1/apt1. Preferentially binds to promoters with the core binding site 5'-TTA[CG]TAA-3'. Activity of the transcription factor is controlled through oxidation of specific cysteine residues resulting in the alteration of its subcellular location. Oxidative stress induces nuclear accumulation and as a result pap1 transcriptional activity. Required for sty1/spc1-conferred staurosporine resistance. This chain is AP-1-like transcription factor (pap1), found in Schizosaccharomyces pombe (strain 972 / ATCC 24843) (Fission yeast).